A 70-amino-acid chain; its full sequence is DNA-directed RNA polymerase subunit omega (70 aa).

The protein belongs to the RNA polymerase subunit omega family. As to quaternary structure, the RNAP catalytic core consists of 2 alpha, 1 beta, 1 beta' and 1 omega subunit. When a sigma factor is associated with the core the holoenzyme is formed, which can initiate transcription.

It catalyses the reaction RNA(n) + a ribonucleoside 5'-triphosphate = RNA(n+1) + diphosphate. In terms of biological role, promotes RNA polymerase assembly. Latches the N- and C-terminal regions of the beta' subunit thereby facilitating its interaction with the beta and alpha subunits. The polypeptide is DNA-directed RNA polymerase subunit omega (Bacillus cytotoxicus (strain DSM 22905 / CIP 110041 / 391-98 / NVH 391-98)).